A 196-amino-acid polypeptide reads, in one-letter code: UPF0056 membrane protein BUsg_434 (196 aa).

6 helical membrane passes run 8–28 (TILL…MTIL), 45–65 (IIAL…LTIL), 71–91 (TVSI…IFPS), 105–125 (FLVP…TLML), 134–154 (MPYL…ILLL), and 174–194 (MGLI…KAWF).

The protein belongs to the UPF0056 (MarC) family.

The protein localises to the cell membrane. In Buchnera aphidicola subsp. Schizaphis graminum (strain Sg), this protein is UPF0056 membrane protein BUsg_434.